We begin with the raw amino-acid sequence, 213 residues long: Citrate synthase, mitochondrial (213 aa).

The active site involves H74. Residues K94 and K100 each carry the N6-acetyllysine; alternate modification. Residues K94 and K100 each carry the N6-succinyllysine; alternate modification. Residue H120 is part of the active site. R129 lines the oxaloacetate pocket. An N6-acetyllysine; alternate modification is found at K148. An N6-succinyllysine; alternate modification is found at K148. K155 bears the N6-acetyllysine mark. K166 carries the post-translational modification N6-acetyllysine; alternate. An N6-succinyllysine; alternate modification is found at K166. The residue at position 168 (K168) is an N6,N6,N6-trimethyllysine. Residue D175 is part of the active site. R201 serves as a coordination point for oxaloacetate.

Belongs to the citrate synthase family. Homodimer. In response to mitochondrial stress, the precursor protein is ubiquitinated by the SIFI complex in the cytoplasm before mitochondrial import, leading to its degradation. Within the SIFI complex, UBR4 initiates ubiquitin chain that are further elongated or branched by KCMF1.

It is found in the mitochondrion matrix. It catalyses the reaction oxaloacetate + acetyl-CoA + H2O = citrate + CoA + H(+). The protein operates within carbohydrate metabolism; tricarboxylic acid cycle; isocitrate from oxaloacetate: step 1/2. Key enzyme of the Krebs tricarboxylic acid cycle which catalyzes the synthesis of citrate from acetyl coenzyme A and oxaloacetate. This is Citrate synthase, mitochondrial from Mesocricetus auratus (Golden hamster).